Here is an 840-residue protein sequence, read N- to C-terminus: MSKYEFIKIEKKWQEFWDNNKTYKVEEDPSIPKEKRLYILDMFPYPSANGLHVGHPEGYTATDIFGRYKLLNGFHVLHPIGFDSFGLPAENYAIQTGTHPQKSTEENINKFKKQIKALGFAYDWDREIRTHEENYYKWTQWIFLQLYKKGLAYVKEMPVWYCPELGTVLANEEIIQTSDGPKSERGSYSVEKKYLRQWVLKITKYAERLLDDLEELEWPESVKEMQRNWIGKSTGVEIEFEIEGHSDKIKVFTTRPDTIFGITYLVIAPENKLIEKITKNNFKQNVLKYVKHEELKSDLNRTSLEKDKSGVFTGSYAFHPITNEKIPIWVGSYVLGTYGTGAVMGVPAHDERDFQFAKKYQLKILPVISKSGKNEILEKAFVDDGISINSPNEFNNLKNSEVKDKVIKWLTKNKKGKEKVAYKLRDWIFSRQRYWGEPIPILFDKLGNAIPLEENDLPLKLPEIANYKPSGTGESPLSRIKDWVNVKDMGFTRETNTMPQWAGSCWYYLRYLDPKNSKEFANKKKIEYWMPVDLYIGGAEHTVLHLLYSRFWHKVLYDLGYVNTKEPFKKLINQGIITSFSYQKENGVLIPNDQVIEKDNKFFDKKDNKEVTQVIAKMSKSLKNVINPDDIIKEFGADSMRIYEMFMGPLTDSKPWNTKGIIGVFRFLNKIWNLREKELSKENPPREIISELHKVIKKVTEDTEKLNFNTAISAMMIFINELLKYEKNYLNIFKPFIIILSPYAPHLAEELWEYIGELPSLFKNSKWPKFDESLIIKGKKEIVLQINGKIKDKILLNKETGEKELKEIAMENSKIKSNLLNKKIVKIIVIKNKLVNIVIK.

A 'HIGH' region motif is present at residues 44-55; it reads PYPSANGLHVGH. The short motif at 617–621 is the 'KMSKS' region element; that stretch reads KMSKS. Lys620 serves as a coordination point for ATP.

Belongs to the class-I aminoacyl-tRNA synthetase family.

It localises to the cytoplasm. It catalyses the reaction tRNA(Leu) + L-leucine + ATP = L-leucyl-tRNA(Leu) + AMP + diphosphate. This is Leucine--tRNA ligase from Borreliella burgdorferi (strain ATCC 35210 / DSM 4680 / CIP 102532 / B31) (Borrelia burgdorferi).